A 121-amino-acid polypeptide reads, in one-letter code: Spermidine export protein MdtJ (121 aa).

A topological domain (cytoplasmic) is located at residue Met-1. The helical transmembrane segment at 2 to 22 (YIYWILLGLAVATEITGTLSM) threads the bilayer. Residues 23 to 31 (KWASVSEGN) lie on the Periplasmic side of the membrane. A helical transmembrane segment spans residues 32 to 52 (GGFILMLVMISLSYIFLSFAV). The Cytoplasmic segment spans residues 53-54 (KK). The chain crosses the membrane as a helical span at residues 55–75 (IALGVAYALWEGIGILFITLF). Residues 76-81 (SVLLFD) lie on the Periplasmic side of the membrane. The helical transmembrane segment at 82 to 102 (ESLSLMKIAGLTTLVAGIVLI) threads the bilayer. Residues 103–121 (KSGTRKARKPELEVNHGAV) lie on the Cytoplasmic side of the membrane.

This sequence belongs to the drug/metabolite transporter (DMT) superfamily. Small multidrug resistance (SMR) (TC 2.A.7.1) family. MdtJ subfamily. As to quaternary structure, forms a complex with MdtI.

The protein localises to the cell inner membrane. Catalyzes the excretion of spermidine. This chain is Spermidine export protein MdtJ (mdtJ), found in Escherichia coli O6:H1 (strain CFT073 / ATCC 700928 / UPEC).